Consider the following 228-residue polypeptide: Ribulose-phosphate 3-epimerase (228 aa).

A substrate-binding site is contributed by serine 12. A divalent metal cation contacts are provided by histidine 37, aspartate 39, and histidine 70. Aspartate 39 serves as the catalytic Proton acceptor. Substrate-binding positions include histidine 70, 146 to 149 (GFGG), 176 to 178 (DGG), and 198 to 199 (GS). Position 176 (aspartate 176) interacts with a divalent metal cation. Aspartate 176 (proton donor) is an active-site residue.

This sequence belongs to the ribulose-phosphate 3-epimerase family. Requires a divalent metal cation as cofactor.

The catalysed reaction is D-ribulose 5-phosphate = D-xylulose 5-phosphate. Its pathway is carbohydrate degradation. Functionally, catalyzes the reversible epimerization of D-ribulose 5-phosphate to D-xylulose 5-phosphate. The protein is Ribulose-phosphate 3-epimerase of Rhodobacter capsulatus (Rhodopseudomonas capsulata).